The following is a 334-amino-acid chain: RNA polymerase sigma factor RpoS (334 aa).

Residues 21–50 (PGIMLDESSADEQPSPRATPKATTSFSSKQ) are disordered. Residues 61–94 (DATQLYLNEIGFSPLLTPEEEVHFARLAQKGDPA) form a sigma-70 factor domain-1 region. The interval 99–169 (MIESNLRLVV…ERAIMNQTRT (71 aa)) is sigma-70 factor domain-2. Residues 123–126 (DLIE) carry the Interaction with polymerase core subunit RpoC motif. Residues 179–254 (ELNVYLRAAR…DDRPTDPCEL (76 aa)) form a sigma-70 factor domain-3 region. The sigma-70 factor domain-4 stretch occupies residues 267-320 (WLTELTDKQREVVIRRFGLRGHESSTLEEVGQEIGLTRERVRQIQVEALKRLRE). Positions 293–312 (LEEVGQEIGLTRERVRQIQV) form a DNA-binding region, H-T-H motif.

This sequence belongs to the sigma-70 factor family. RpoS subfamily. In terms of assembly, interacts with the RNA polymerase core enzyme.

The protein localises to the cytoplasm. In terms of biological role, sigma factors are initiation factors that promote the attachment of RNA polymerase to specific initiation sites and are then released. This sigma factor is the master transcriptional regulator of the stationary phase and the general stress response. This is RNA polymerase sigma factor RpoS from Pseudomonas aeruginosa (strain ATCC 15692 / DSM 22644 / CIP 104116 / JCM 14847 / LMG 12228 / 1C / PRS 101 / PAO1).